A 259-amino-acid chain; its full sequence is Phosphate import ATP-binding protein PstB (259 aa).

The ABC transporter domain maps to 11-254 (AESKNLNFYY…PDNPRTEDYI (244 aa)). Position 43-50 (43-50 (GPSGCGKS)) interacts with ATP.

The protein belongs to the ABC transporter superfamily. Phosphate importer (TC 3.A.1.7) family. The complex is composed of two ATP-binding proteins (PstB), two transmembrane proteins (PstC and PstA) and a solute-binding protein (PstS).

It localises to the cell inner membrane. The catalysed reaction is phosphate(out) + ATP + H2O = ADP + 2 phosphate(in) + H(+). Part of the ABC transporter complex PstSACB involved in phosphate import. Responsible for energy coupling to the transport system. In Geobacter sulfurreducens (strain ATCC 51573 / DSM 12127 / PCA), this protein is Phosphate import ATP-binding protein PstB.